The chain runs to 367 residues: tRNA-specific 2-thiouridylase MnmA (367 aa).

ATP is bound by residues 9 to 16 (GLSGGVDS) and M35. The tract at residues 95 to 97 (NPD) is interaction with target base in tRNA. C100 functions as the Nucleophile in the catalytic mechanism. A disulfide bridge links C100 with C196. Residue G124 participates in ATP binding. Residues 146–148 (KDQ) are interaction with tRNA. C196 functions as the Cysteine persulfide intermediate in the catalytic mechanism. Residues 308 to 309 (RY) are interaction with tRNA.

The protein belongs to the MnmA/TRMU family.

The protein localises to the cytoplasm. The catalysed reaction is S-sulfanyl-L-cysteinyl-[protein] + uridine(34) in tRNA + AH2 + ATP = 2-thiouridine(34) in tRNA + L-cysteinyl-[protein] + A + AMP + diphosphate + H(+). In terms of biological role, catalyzes the 2-thiolation of uridine at the wobble position (U34) of tRNA, leading to the formation of s(2)U34. The chain is tRNA-specific 2-thiouridylase MnmA from Nitrosococcus oceani (strain ATCC 19707 / BCRC 17464 / JCM 30415 / NCIMB 11848 / C-107).